The primary structure comprises 281 residues: 4-deoxy-L-threo-5-hexosulose-uronate ketol-isomerase (281 aa).

Zn(2+) contacts are provided by histidine 198, histidine 200, glutamate 205, and histidine 248.

Belongs to the KduI family. It depends on Zn(2+) as a cofactor.

The enzyme catalyses 5-dehydro-4-deoxy-D-glucuronate = 3-deoxy-D-glycero-2,5-hexodiulosonate. It functions in the pathway glycan metabolism; pectin degradation; 2-dehydro-3-deoxy-D-gluconate from pectin: step 4/5. In terms of biological role, catalyzes the isomerization of 5-dehydro-4-deoxy-D-glucuronate to 3-deoxy-D-glycero-2,5-hexodiulosonate. The protein is 4-deoxy-L-threo-5-hexosulose-uronate ketol-isomerase of Lacticaseibacillus casei (strain BL23) (Lactobacillus casei).